The chain runs to 236 residues: Lipoprotein signal peptidase (236 aa).

The next 4 helical transmembrane spans lie at 8-28 (FYGIALLAVVIDQVLKLWVYF), 44-64 (WFKLFYTLNPGMAFGIQFGFT), 68-88 (VLLTIIRIIATSMIIKYIWNL), and 98-118 (LLWGWSLILGGAAGNGIDSIF). Catalysis depends on residues D141 and D174. A helical membrane pass occupies residues 166-186 (CLPVFNLADVAILAGVALIVL).

Belongs to the peptidase A8 family.

Its subcellular location is the cell inner membrane. The catalysed reaction is Release of signal peptides from bacterial membrane prolipoproteins. Hydrolyzes -Xaa-Yaa-Zaa-|-(S,diacylglyceryl)Cys-, in which Xaa is hydrophobic (preferably Leu), and Yaa (Ala or Ser) and Zaa (Gly or Ala) have small, neutral side chains.. It functions in the pathway protein modification; lipoprotein biosynthesis (signal peptide cleavage). This protein specifically catalyzes the removal of signal peptides from prolipoproteins. This is Lipoprotein signal peptidase from Amoebophilus asiaticus (strain 5a2).